The following is a 504-amino-acid chain: Histidine ammonia-lyase (504 aa).

The segment at residues 141 to 143 (ASG) is a cross-link (5-imidazolinone (Ala-Gly)). Position 142 is a 2,3-didehydroalanine (Ser) (serine 142).

It belongs to the PAL/histidase family. Contains an active site 4-methylidene-imidazol-5-one (MIO), which is formed autocatalytically by cyclization and dehydration of residues Ala-Ser-Gly.

The protein localises to the cytoplasm. It catalyses the reaction L-histidine = trans-urocanate + NH4(+). The protein operates within amino-acid degradation; L-histidine degradation into L-glutamate; N-formimidoyl-L-glutamate from L-histidine: step 1/3. The protein is Histidine ammonia-lyase of Geobacillus kaustophilus (strain HTA426).